We begin with the raw amino-acid sequence, 405 residues long: uncharacterized protein (405 aa).

Residues 1 to 18 (MPEPVAEPALNGLRLNLR) are Cytoplasmic-facing. Residues 19–39 (IVSIVMFNFASYLTIGLPLAV) traverse the membrane as a helical segment. Over 40–46 (LPGYVHD) the chain is Periplasmic. The chain crosses the membrane as a helical span at residues 47 to 67 (VMGFSAFWAGLVISLQYFATL). The Cytoplasmic portion of the chain corresponds to 68–84 (LSRPHAGRYADSLGPKK). A helical transmembrane segment spans residues 85–105 (IVVFGLCGCFLSGLGYLTAGL). Thr106 is a topological domain (periplasmic). A helical membrane pass occupies residues 107-127 (ASLPVISLLLLCLGRVILGIG). Topologically, residues 128–155 (QSFAGTGSTLWGVGVVGSLHIGRVISWN) are cytoplasmic. A helical membrane pass occupies residues 156-176 (GIVTYGAMAMGAPLGVVFYHW). Position 177 (Gly177) is a topological domain, periplasmic. A helical transmembrane segment spans residues 178–198 (GLQALALIIMGVALVAILLAI). Over 199-223 (PRPTVKASKGKPLPFRAVLGRVWLY) the chain is Cytoplasmic. Residues 224-244 (GMALALASAGFGVIATFITLF) traverse the membrane as a helical segment. Residues 245–251 (YDAKGWD) are Periplasmic-facing. A helical transmembrane segment spans residues 252–272 (GAAFALTLFSCAFVGTRLLFP). Over 273–282 (NGINRIGGLN) the chain is Cytoplasmic. Residues 283-303 (VAMICFSVEIIGLLLVGVATM) traverse the membrane as a helical segment. The Periplasmic portion of the chain corresponds to 304–308 (PWMAK). Residues 309–329 (IGVLLAGAGFSLVFPALGVVA) form a helical membrane-spanning segment. Topologically, residues 330–343 (VKAVPQQNQGAALA) are cytoplasmic. Residues 344-364 (TYTVFMDLSLGVTGPLAGLVM) form a helical membrane-spanning segment. A topological domain (periplasmic) is located at residue Ser365. The helical transmembrane segment at 366–386 (WAGVPVIYLAAAGLVAIALLL) threads the bilayer. Residues 387-405 (TWRLKKRPPEHVPEAASSS) lie on the Cytoplasmic side of the membrane.

Belongs to the major facilitator superfamily. YhhS family.

The protein resides in the cell inner membrane. Confers high-level resistance to glyphosate when overexpressed. Overexpression has no effect on intracellular arabinose concentrations. This is an uncharacterized protein from Escherichia coli (strain K12).